A 137-amino-acid polypeptide reads, in one-letter code: Probable DNA-directed RNA polymerases I, II, and III subunit RPABC2 (137 aa).

Composition is skewed to acidic residues over residues Met1–Glu27 and Asn34–Asp43. Positions Met1–Asp43 are disordered.

Belongs to the archaeal Rpo6/eukaryotic RPB6 RNA polymerase subunit family. In terms of assembly, component of the RNA polymerase I (Pol I), RNA polymerase II (Pol II) and RNA polymerase III (Pol III) complexes consisting of at least 13, 12 and 17 subunits, respectively.

The protein localises to the nucleus. Its function is as follows. DNA-dependent RNA polymerases catalyze the transcription of DNA into RNA using the four ribonucleoside triphosphates as substrates. Common component of RNA polymerases I, II and III which synthesize ribosomal RNA precursors, mRNA precursors and many functional non-coding RNAs, and small RNAs, such as 5S rRNA and tRNAs, respectively. Pol II is the central component of the basal RNA polymerase II transcription machinery. Pols are composed of mobile elements that move relative to each other. In Pol II, RPB6 is part of the clamp element and together with parts of RPB1 and RPB2 forms a pocket to which the RPB4-RPB7 subcomplex binds. The protein is Probable DNA-directed RNA polymerases I, II, and III subunit RPABC2 (rpb-6) of Caenorhabditis elegans.